A 920-amino-acid polypeptide reads, in one-letter code: Glutamate receptor 2.2 (920 aa).

The N-terminal stretch at 1–24 is a signal peptide; sequence MKNSKLFFRFLFLFFFFCLESSRG. The Extracellular portion of the chain corresponds to 25-580; sequence QDNGKTQVNI…DKFSFLKPLS (556 aa). N-linked (GlcNAc...) asparagine glycans are attached at residues N53, N204, N267, N331, N342, N477, and N542. Residues 581–601 traverse the membrane as a helical segment; it reads IELWLTTLVFFFLVGISVWTL. Residues 602–610 are Cytoplasmic-facing; sequence EHRVNSDFR. Residues 611–631 traverse the membrane as a helical segment; that stretch reads GPANYQASTIFWFAFSTMVFA. Residues 632 to 635 are Cytoplasmic-facing; sequence PRER. A helical membrane pass occupies residues 636–656; it reads VLSFGARSLVVTWYFVLLVLT. Residues 657–830 are Extracellular-facing; the sequence is QSYTASLASL…VTAIQLGVGS (174 aa). N702 carries N-linked (GlcNAc...) asparagine glycosylation. The helical transmembrane segment at 831–851 threads the bilayer; sequence FWFLFLVVFVVCVLALGKFTF. The Cytoplasmic portion of the chain corresponds to 852–920; it reads CFLWKTKGKD…QVNQTDPDCL (69 aa).

Belongs to the glutamate-gated ion channel (TC 1.A.10.1) family. In terms of assembly, may form heteromers. In terms of tissue distribution, expressed predominantly in roots.

It is found in the membrane. Functionally, glutamate-gated receptor that probably acts as a non-selective cation channel. May be involved in light-signal transduction and calcium homeostasis via the regulation of calcium influx into cells. This chain is Glutamate receptor 2.2 (GLR2.2), found in Arabidopsis thaliana (Mouse-ear cress).